Consider the following 97-residue polypeptide: Co-chaperonin GroES (97 aa).

The protein belongs to the GroES chaperonin family. In terms of assembly, heptamer of 7 subunits arranged in a ring. Interacts with the chaperonin GroEL.

It is found in the cytoplasm. Together with the chaperonin GroEL, plays an essential role in assisting protein folding. The GroEL-GroES system forms a nano-cage that allows encapsulation of the non-native substrate proteins and provides a physical environment optimized to promote and accelerate protein folding. GroES binds to the apical surface of the GroEL ring, thereby capping the opening of the GroEL channel. The polypeptide is Co-chaperonin GroES (Burkholderia cepacia (Pseudomonas cepacia)).